A 285-amino-acid polypeptide reads, in one-letter code: Ribosomal RNA small subunit methyltransferase A (285 aa).

Positions 27, 29, 54, 75, 100, and 120 each coordinate S-adenosyl-L-methionine.

The protein belongs to the class I-like SAM-binding methyltransferase superfamily. rRNA adenine N(6)-methyltransferase family. RsmA subfamily.

The protein localises to the cytoplasm. The catalysed reaction is adenosine(1518)/adenosine(1519) in 16S rRNA + 4 S-adenosyl-L-methionine = N(6)-dimethyladenosine(1518)/N(6)-dimethyladenosine(1519) in 16S rRNA + 4 S-adenosyl-L-homocysteine + 4 H(+). Specifically dimethylates two adjacent adenosines (A1518 and A1519) in the loop of a conserved hairpin near the 3'-end of 16S rRNA in the 30S particle. May play a critical role in biogenesis of 30S subunits. The protein is Ribosomal RNA small subunit methyltransferase A of Phenylobacterium zucineum (strain HLK1).